Consider the following 549-residue polypeptide: Glucose-6-phosphate isomerase (549 aa).

E355 acts as the Proton donor in catalysis. Residues H386 and K514 contribute to the active site.

It belongs to the GPI family.

Its subcellular location is the cytoplasm. It catalyses the reaction alpha-D-glucose 6-phosphate = beta-D-fructose 6-phosphate. Its pathway is carbohydrate biosynthesis; gluconeogenesis. The protein operates within carbohydrate degradation; glycolysis; D-glyceraldehyde 3-phosphate and glycerone phosphate from D-glucose: step 2/4. Functionally, catalyzes the reversible isomerization of glucose-6-phosphate to fructose-6-phosphate. This Salmonella paratyphi C (strain RKS4594) protein is Glucose-6-phosphate isomerase.